Consider the following 286-residue polypeptide: Phosphatidylserine decarboxylase proenzyme (286 aa).

Residues Asp89, His146, and Ser252 each act as charge relay system; for autoendoproteolytic cleavage activity in the active site. The active-site Schiff-base intermediate with substrate; via pyruvic acid; for decarboxylase activity is the Ser252. Residue Ser252 is modified to Pyruvic acid (Ser); by autocatalysis.

Belongs to the phosphatidylserine decarboxylase family. PSD-B subfamily. Prokaryotic type I sub-subfamily. As to quaternary structure, heterodimer of a large membrane-associated beta subunit and a small pyruvoyl-containing alpha subunit. It depends on pyruvate as a cofactor. Is synthesized initially as an inactive proenzyme. Formation of the active enzyme involves a self-maturation process in which the active site pyruvoyl group is generated from an internal serine residue via an autocatalytic post-translational modification. Two non-identical subunits are generated from the proenzyme in this reaction, and the pyruvate is formed at the N-terminus of the alpha chain, which is derived from the carboxyl end of the proenzyme. The autoendoproteolytic cleavage occurs by a canonical serine protease mechanism, in which the side chain hydroxyl group of the serine supplies its oxygen atom to form the C-terminus of the beta chain, while the remainder of the serine residue undergoes an oxidative deamination to produce ammonia and the pyruvoyl prosthetic group on the alpha chain. During this reaction, the Ser that is part of the protease active site of the proenzyme becomes the pyruvoyl prosthetic group, which constitutes an essential element of the active site of the mature decarboxylase.

The protein localises to the cell membrane. It catalyses the reaction a 1,2-diacyl-sn-glycero-3-phospho-L-serine + H(+) = a 1,2-diacyl-sn-glycero-3-phosphoethanolamine + CO2. It participates in phospholipid metabolism; phosphatidylethanolamine biosynthesis; phosphatidylethanolamine from CDP-diacylglycerol: step 2/2. In terms of biological role, catalyzes the formation of phosphatidylethanolamine (PtdEtn) from phosphatidylserine (PtdSer). This chain is Phosphatidylserine decarboxylase proenzyme, found in Shewanella loihica (strain ATCC BAA-1088 / PV-4).